Consider the following 349-residue polypeptide: uncharacterized protein (349 aa).

Positions 116–135 (HFSQTNPKSTPEPPCTSSSG) are enriched in polar residues. The tract at residues 116 to 148 (HFSQTNPKSTPEPPCTSSSGAGDCHENLPADGY) is disordered.

This is an uncharacterized protein from Caenorhabditis elegans.